The sequence spans 412 residues: Hyaluronidase-3 (412 aa).

An N-terminal signal peptide occupies residues 1–22; that stretch reads MITQLGLTLVVGLTLCLVHVQA. 5 disulfides stabilise this stretch: cysteine 42–cysteine 332, cysteine 206–cysteine 221, cysteine 357–cysteine 368, cysteine 362–cysteine 396, and cysteine 398–cysteine 407. Asparagine 69 carries N-linked (GlcNAc...) asparagine glycosylation. Glutamate 129 serves as the catalytic Proton donor. N-linked (GlcNAc...) asparagine glycosylation occurs at asparagine 216. The EGF-like domain maps to 353 to 408; sequence AATACSHQRCHGHGRCSWKDPGQMEAFLHLQPDDNLGAWKSFRCRCYLGWSGPTCL.

This sequence belongs to the glycosyl hydrolase 56 family. Post-translationally, N-glycosylated.

Its subcellular location is the secreted. It is found in the cell membrane. The protein resides in the cytoplasmic vesicle. It localises to the secretory vesicle. The protein localises to the acrosome. Its subcellular location is the endoplasmic reticulum. It is found in the early endosome. The catalysed reaction is Random hydrolysis of (1-&gt;4)-linkages between N-acetyl-beta-D-glucosamine and D-glucuronate residues in hyaluronate.. Facilitates sperm penetration into the layer of cumulus cells surrounding the egg by digesting hyaluronic acid. Involved in induction of the acrosome reaction in the sperm. Involved in follicular atresia, the breakdown of immature ovarian follicles that are not selected to ovulate. Induces ovarian granulosa cell apoptosis, possibly via apoptotic signaling pathway involving CASP8 and CASP3 activation, and poly(ADP-ribose) polymerase (PARP) cleavage. Has no hyaluronidase activity in embryonic fibroblasts in vitro. Has no hyaluronidase activity in granulosa cells in vitro. This Rattus norvegicus (Rat) protein is Hyaluronidase-3 (Hyal3).